Reading from the N-terminus, the 147-residue chain is Large ribosomal subunit protein uL15 (147 aa).

Residues 1 to 42 (MTIKLHHLRPAPGAKTDKTRVGRGEGSKGKTAGRGTKGTKAR) are disordered. The segment covering 15 to 28 (KTDKTRVGRGEGSK) has biased composition (basic and acidic residues).

This sequence belongs to the universal ribosomal protein uL15 family. In terms of assembly, part of the 50S ribosomal subunit.

In terms of biological role, binds to the 23S rRNA. In Nocardia farcinica (strain IFM 10152), this protein is Large ribosomal subunit protein uL15.